Here is a 159-residue protein sequence, read N- to C-terminus: Small ribosomal subunit protein uS5c (159 aa).

The S5 DRBM domain maps to 17 to 80 (WEERVVSVQR…TDGKKNVITV (64 aa)).

This sequence belongs to the universal ribosomal protein uS5 family. In terms of assembly, part of the 30S ribosomal subunit. Contacts protein S4.

The protein resides in the plastid. It is found in the chloroplast. With S4 and S12 plays an important role in translational accuracy. This Emiliania huxleyi (Coccolithophore) protein is Small ribosomal subunit protein uS5c (rps5).